Here is a 129-residue protein sequence, read N- to C-terminus: ATP synthase epsilon chain (129 aa).

The protein belongs to the ATPase epsilon chain family. In terms of assembly, F-type ATPases have 2 components, CF(1) - the catalytic core - and CF(0) - the membrane proton channel. CF(1) has five subunits: alpha(3), beta(3), gamma(1), delta(1), epsilon(1). CF(0) has three main subunits: a, b and c.

It is found in the cell inner membrane. Produces ATP from ADP in the presence of a proton gradient across the membrane. The polypeptide is ATP synthase epsilon chain (Campylobacter fetus subsp. fetus (strain 82-40)).